The chain runs to 34 residues: Jingzhaotoxin F7-10.36 (34 aa).

3 cysteine pairs are disulfide-bonded: C2–C17, C9–C22, and C16–C29.

The protein belongs to the neurotoxin 10 (Hwtx-1) family. 50 (Jztz-F7) subfamily. As to expression, expressed by the venom gland.

It localises to the secreted. Its function is as follows. Probable ion channel inhibitor. This Chilobrachys guangxiensis (Chinese earth tiger tarantula) protein is Jingzhaotoxin F7-10.36.